The following is a 127-amino-acid chain: Anti-adapter protein IraD (127 aa).

This sequence belongs to the GpW/Gp25 family. IraD subfamily. Interacts with RssB.

The protein resides in the cytoplasm. In terms of biological role, inhibits RpoS proteolysis by regulating RssB activity, thereby increasing the stability of the sigma stress factor RpoS during oxidative stress. Its effect on RpoS stability is due to its interaction with RssB, which probably blocks the interaction of RssB with RpoS, and the consequent delivery of the RssB-RpoS complex to the ClpXP protein degradation pathway. In Escherichia coli O127:H6 (strain E2348/69 / EPEC), this protein is Anti-adapter protein IraD.